The chain runs to 432 residues: Glutamate-1-semialdehyde 2,1-aminomutase 2 (432 aa).

Lys268 carries the N6-(pyridoxal phosphate)lysine modification.

Belongs to the class-III pyridoxal-phosphate-dependent aminotransferase family. HemL subfamily. As to quaternary structure, homodimer. Pyridoxal 5'-phosphate is required as a cofactor.

The protein resides in the cytoplasm. It catalyses the reaction (S)-4-amino-5-oxopentanoate = 5-aminolevulinate. Its pathway is porphyrin-containing compound metabolism; protoporphyrin-IX biosynthesis; 5-aminolevulinate from L-glutamyl-tRNA(Glu): step 2/2. This chain is Glutamate-1-semialdehyde 2,1-aminomutase 2, found in Listeria monocytogenes serotype 4b (strain CLIP80459).